A 461-amino-acid polypeptide reads, in one-letter code: CUGBP Elav-like family member 3 (461 aa).

2 consecutive RRM domains span residues 7 to 88 (IKLF…PADS) and 95 to 175 (RKLF…FADT). Residues 345 to 358 (PPALVAQQPPPPPQ) are compositionally biased toward pro residues. A disordered region spans residues 345–375 (PPALVAQQPPPPPQQQQQQQQQQQQREGPDG). A compositionally biased stretch (low complexity) spans 359-369 (QQQQQQQQQQQ). Positions 376–454 (CNIFIYHLPQ…KRLKVQLKRP (79 aa)) constitute an RRM 3 domain.

It belongs to the CELF/BRUNOL family.

It is found in the nucleus. It localises to the cytoplasm. RNA-binding protein involved in the regulation of pre-mRNA alternative splicing. Mediates exon inclusion and/or exclusion in pre-mRNA that are subject to tissue-specific and developmentally regulated alternative splicing. Specifically activates exon 5 inclusion of cardiac isoforms of TNNT2 during heart remodeling at the juvenile to adult transition. Activates the splicing of MAPT/Tau exon 10. Binds to muscle-specific splicing enhancer (MSE) intronic sites flanking the alternative exon 5 of TNNT2 pre-mRNA. This chain is CUGBP Elav-like family member 3 (CELF3), found in Bos taurus (Bovine).